Reading from the N-terminus, the 461-residue chain is Bifunctional protein GlmU (461 aa).

The pyrophosphorylase stretch occupies residues 1–243; it reads MNATVPSAAP…EDELRGINSR (243 aa). UDP-N-acetyl-alpha-D-glucosamine contacts are provided by residues 24 to 27, lysine 38, glutamine 86, 91 to 92, 112 to 114, glycine 155, glutamate 169, asparagine 184, and asparagine 241; these read LAAG, GT, and YGD. Residue aspartate 114 participates in Mg(2+) binding. Asparagine 241 lines the Mg(2+) pocket. The segment at 244–264 is linker; the sequence is AELAEAEACVQRRLRAAALDG. The interval 265–461 is N-acetyltransferase; that stretch reads GATLVAPETV…AALRRKKEQG (197 aa). UDP-N-acetyl-alpha-D-glucosamine is bound by residues arginine 330 and lysine 348. The Proton acceptor role is filled by histidine 360. 2 residues coordinate UDP-N-acetyl-alpha-D-glucosamine: tyrosine 363 and asparagine 374. Acetyl-CoA contacts are provided by residues alanine 377, 383–384, serine 402, alanine 420, and arginine 437; that span reads NY.

The protein in the N-terminal section; belongs to the N-acetylglucosamine-1-phosphate uridyltransferase family. In the C-terminal section; belongs to the transferase hexapeptide repeat family. Homotrimer. Requires Mg(2+) as cofactor.

Its subcellular location is the cytoplasm. It catalyses the reaction alpha-D-glucosamine 1-phosphate + acetyl-CoA = N-acetyl-alpha-D-glucosamine 1-phosphate + CoA + H(+). The enzyme catalyses N-acetyl-alpha-D-glucosamine 1-phosphate + UTP + H(+) = UDP-N-acetyl-alpha-D-glucosamine + diphosphate. The protein operates within nucleotide-sugar biosynthesis; UDP-N-acetyl-alpha-D-glucosamine biosynthesis; N-acetyl-alpha-D-glucosamine 1-phosphate from alpha-D-glucosamine 6-phosphate (route II): step 2/2. It participates in nucleotide-sugar biosynthesis; UDP-N-acetyl-alpha-D-glucosamine biosynthesis; UDP-N-acetyl-alpha-D-glucosamine from N-acetyl-alpha-D-glucosamine 1-phosphate: step 1/1. It functions in the pathway bacterial outer membrane biogenesis; LPS lipid A biosynthesis. Catalyzes the last two sequential reactions in the de novo biosynthetic pathway for UDP-N-acetylglucosamine (UDP-GlcNAc). The C-terminal domain catalyzes the transfer of acetyl group from acetyl coenzyme A to glucosamine-1-phosphate (GlcN-1-P) to produce N-acetylglucosamine-1-phosphate (GlcNAc-1-P), which is converted into UDP-GlcNAc by the transfer of uridine 5-monophosphate (from uridine 5-triphosphate), a reaction catalyzed by the N-terminal domain. The sequence is that of Bifunctional protein GlmU from Gluconacetobacter diazotrophicus (strain ATCC 49037 / DSM 5601 / CCUG 37298 / CIP 103539 / LMG 7603 / PAl5).